A 284-amino-acid polypeptide reads, in one-letter code: Nucleotide-binding protein TTE1834 (284 aa).

An ATP-binding site is contributed by 8 to 15 (GLSGAGKT). 58-61 (DLRG) is a binding site for GTP.

It belongs to the RapZ-like family.

Functionally, displays ATPase and GTPase activities. The polypeptide is Nucleotide-binding protein TTE1834 (Caldanaerobacter subterraneus subsp. tengcongensis (strain DSM 15242 / JCM 11007 / NBRC 100824 / MB4) (Thermoanaerobacter tengcongensis)).